Reading from the N-terminus, the 488-residue chain is 3-octaprenyl-4-hydroxybenzoate carboxy-lyase (488 aa).

Residue Asn172 coordinates Mn(2+). Residues 175–177 (IYR), 189–191 (RWL), and 194–195 (RG) each bind prenylated FMN. Glu238 contacts Mn(2+). Residue Asp287 is the Proton donor of the active site.

Belongs to the UbiD family. Homohexamer. Requires prenylated FMN as cofactor. The cofactor is Mn(2+).

It is found in the cell membrane. It catalyses the reaction a 4-hydroxy-3-(all-trans-polyprenyl)benzoate + H(+) = a 2-(all-trans-polyprenyl)phenol + CO2. Its pathway is cofactor biosynthesis; ubiquinone biosynthesis. In terms of biological role, catalyzes the decarboxylation of 3-octaprenyl-4-hydroxy benzoate to 2-octaprenylphenol, an intermediate step in ubiquinone biosynthesis. This Pseudomonas fluorescens (strain Pf0-1) protein is 3-octaprenyl-4-hydroxybenzoate carboxy-lyase.